We begin with the raw amino-acid sequence, 522 residues long: Maturase K (522 aa).

It belongs to the intron maturase 2 family. MatK subfamily.

It localises to the plastid. The protein resides in the chloroplast. In terms of biological role, usually encoded in the trnK tRNA gene intron. Probably assists in splicing its own and other chloroplast group II introns. This Sapindus saponaria (Soapberry) protein is Maturase K.